Here is a 414-residue protein sequence, read N- to C-terminus: N-carbamoyl-L-amino-acid amidohydrolase (414 aa).

Residues histidine 83, aspartate 94, glutamate 129, and histidine 195 each coordinate a divalent metal cation. Positions 198, 231, 281, 294, and 363 each coordinate an N-carbamoyl-L-alpha-amino acid. Residues 214–333 (GIAGPSWFKV…QIEKNMAAVP (120 aa)) form an involved in dimerization region. Residue histidine 388 participates in a divalent metal cation binding.

Belongs to the peptidase M20 family. Homodimer. Requires Mn(2+) as cofactor. Ni(2+) serves as cofactor. The cofactor is Co(2+). It depends on Fe(2+) as a cofactor.

It carries out the reaction an N-carbamoyl-L-alpha-amino acid + H2O + 2 H(+) = an L-alpha-amino acid + NH4(+) + CO2. The enzyme catalyses N-carbamoyl-L-methionine + H2O + 2 H(+) = L-methionine + NH4(+) + CO2. Functionally, catalyzes the hydrolysis of N-carbamoyl-L-alpha-amino acids to free L-alpha-amino acids. Is strictly L-specific since it is inactive toward N-carbamoyl-D-alpha-amino acids. The polypeptide is N-carbamoyl-L-amino-acid amidohydrolase (Pseudomonas sp. (strain NS671)).